A 476-amino-acid polypeptide reads, in one-letter code: Rifampicin monooxygenase (476 aa).

FAD contacts are provided by threonine 12, glutamate 31, lysine 32, glutamine 98, leucine 122, and threonine 156. Rifampicin contacts are provided by arginine 196 and arginine 213. Aspartate 277, leucine 290, and asparagine 291 together coordinate FAD.

This sequence belongs to the rifampicin monooxygenase family. Requires FAD as cofactor.

The catalysed reaction is rifampicin + NADPH + O2 = rifampicin para-naphthoquinone carboxamide + NADP(+) + H2O + H(+). The enzyme catalyses rifampicin + NADH + O2 = rifampicin para-naphthoquinone carboxamide + NAD(+) + H2O + H(+). It carries out the reaction rifamycin SV + NADPH + O2 = rifamycin SV para-naphthoquinone carboxamide + NADP(+) + H2O. It catalyses the reaction rifamycin SV + NADH + O2 = rifamycin SV para-naphthoquinone carboxamide + NAD(+) + H2O. Its function is as follows. Monooxygenase that can modify rifampicin, thereby inactivating its antibiotic activity. Inactivates a broad range of rifamycin antibiotics. This Streptomyces venezuelae (strain ATCC 10712 / CBS 650.69 / DSM 40230 / JCM 4526 / NBRC 13096 / PD 04745) protein is Rifampicin monooxygenase.